The sequence spans 476 residues: H2.0-like homeobox protein (476 aa).

Disordered regions lie at residues 120–169 (QHLP…PSSK), 328–401 (WRHS…HQTT), and 413–476 (TASS…LAGL). Low complexity-rich tracts occupy residues 123 to 134 (PQQSPTQQQQPQ) and 158 to 168 (HHSGSAPAPSS). Positions 273–332 (RSWSRAVFSNLQRKGLEKRFEIQKYVTKPDRKQLAAMLGLTDAQVKVWFQNRRMKWRHSK) form a DNA-binding region, homeobox. 2 stretches are compositionally biased toward basic and acidic residues: residues 331–346 (SKEA…EAGE) and 355–368 (EGER…RSEG). A compositionally biased stretch (acidic residues) spans 369–379 (EAESESSDSES). The segment covering 386 to 397 (DTERTEGTERSL) has biased composition (basic and acidic residues). Positions 413 to 434 (TASSSTSGSSFSFSSTSSLGSG) are enriched in low complexity. Polar residues-rich tracts occupy residues 435–446 (NTHVGSASSLGG) and 455–467 (HQPS…QSPE).

It belongs to the H2.0 homeobox family. Expressed in Th1 cells, CD8-positive T-cells, B-cells and NK cells.

Its subcellular location is the nucleus. Its function is as follows. Transcription factor required for TBX21/T-bet-dependent maturation of Th1 cells as well as maintenance of Th1-specific gene expression. Involved in embryogenesis and hematopoiesis. This Mus musculus (Mouse) protein is H2.0-like homeobox protein (Hlx).